We begin with the raw amino-acid sequence, 184 residues long: Oligoribonuclease (184 aa).

An Exonuclease domain is found at 8-169; that stretch reads LIWIDLEMTG…EDIHESIIEL (162 aa). Tyr-129 is a catalytic residue.

It belongs to the oligoribonuclease family.

It is found in the cytoplasm. Functionally, 3'-to-5' exoribonuclease specific for small oligoribonucleotides. In Buchnera aphidicola subsp. Schizaphis graminum (strain Sg), this protein is Oligoribonuclease.